We begin with the raw amino-acid sequence, 550 residues long: (S)-beta-bisabolene synthase (550 aa).

D303, D307, S451, and E455 together coordinate Mg(2+). The DDXXD motif motif lies at 303 to 307 (DDTYD).

Belongs to the terpene synthase family. Tpsa subfamily. It depends on Mg(2+) as a cofactor. Mn(2+) serves as cofactor. Expressed only in young rhizomes. Not detected in leaves, roots and mature rhizomes.

The catalysed reaction is (2E,6E)-farnesyl diphosphate = (S)-beta-bisabolene + diphosphate. In terms of biological role, sesquiterpene synthase involved in the biosynthesis of bisabolene. The chain is (S)-beta-bisabolene synthase (TPS1) from Zingiber officinale (Ginger).